Reading from the N-terminus, the 496-residue chain is tRNA modification GTPase mss1, mitochondrial (496 aa).

A mitochondrion-targeting transit peptide spans 1-19 (MRILNRVFLNTFQACFRRF). The region spanning 239-416 (GINVAILGPS…FLQALSSTFE (178 aa)) is the TrmE-type G domain. GTP-binding positions include 246 to 253 (GPSNAGKS), 293 to 297 (DTAGL), and 363 to 366 (NKVD).

It belongs to the TRAFAC class TrmE-Era-EngA-EngB-Septin-like GTPase superfamily. TrmE GTPase family.

Its subcellular location is the mitochondrion. Functionally, GTPase involved in the 5-carboxymethylaminomethyl modification (mnm(5)s(2)U34) of the wobble uridine base in mitochondrial tRNAs. The sequence is that of tRNA modification GTPase mss1, mitochondrial (mss1) from Schizosaccharomyces pombe (strain 972 / ATCC 24843) (Fission yeast).